A 1056-amino-acid polypeptide reads, in one-letter code: Sucrose-phosphate synthase (1056 aa).

A compositionally biased stretch (basic and acidic residues) spans 112-123; it reads HVERERGRREAT. The interval 112–132 is disordered; that stretch reads HVERERGRREATADMSEDLSE. Phosphoserine is present on residues Ser158 and Ser424. The interval 681 to 700 is disordered; it reads NWQRIDEGSENSDTDSAGDS.

The protein belongs to the glycosyltransferase 1 family. In terms of assembly, homodimer or homotetramer. In terms of processing, phosphorylated at Ser-158 and Ser-424.

It catalyses the reaction beta-D-fructose 6-phosphate + UDP-alpha-D-glucose = sucrose 6(F)-phosphate + UDP + H(+). The protein operates within glycan biosynthesis; sucrose biosynthesis; sucrose from D-fructose 6-phosphate and UDP-alpha-D-glucose: step 1/2. Its activity is regulated as follows. Activity is regulated by phosphorylation and moderated by concentration of metabolites and light. Functionally, plays a role in photosynthetic sucrose synthesis by catalyzing the rate-limiting step of sucrose biosynthesis from UDP-glucose and fructose- 6-phosphate. Involved in the regulation of carbon partitioning in the leaves of plants. May regulate the synthesis of sucrose and therefore play a major role as a limiting factor in the export of photoassimilates out of the leaf. Plays a role for sucrose availability that is essential for plant growth and fiber elongation. The sequence is that of Sucrose-phosphate synthase (SPS1) from Spinacia oleracea (Spinach).